The following is a 319-amino-acid chain: Acetyl-coenzyme A carboxylase carboxyl transferase subunit alpha (319 aa).

The CoA carboxyltransferase C-terminal domain occupies 35–296 (NIDEEVHRLR…KAQLLTDLAD (262 aa)).

Belongs to the AccA family. In terms of assembly, acetyl-CoA carboxylase is a heterohexamer composed of biotin carboxyl carrier protein (AccB), biotin carboxylase (AccC) and two subunits each of ACCase subunit alpha (AccA) and ACCase subunit beta (AccD).

The protein localises to the cytoplasm. It catalyses the reaction N(6)-carboxybiotinyl-L-lysyl-[protein] + acetyl-CoA = N(6)-biotinyl-L-lysyl-[protein] + malonyl-CoA. It functions in the pathway lipid metabolism; malonyl-CoA biosynthesis; malonyl-CoA from acetyl-CoA: step 1/1. In terms of biological role, component of the acetyl coenzyme A carboxylase (ACC) complex. First, biotin carboxylase catalyzes the carboxylation of biotin on its carrier protein (BCCP) and then the CO(2) group is transferred by the carboxyltransferase to acetyl-CoA to form malonyl-CoA. This chain is Acetyl-coenzyme A carboxylase carboxyl transferase subunit alpha, found in Escherichia coli O45:K1 (strain S88 / ExPEC).